Consider the following 149-residue polypeptide: Deoxyuridine 5'-triphosphate nucleotidohydrolase (149 aa).

Substrate-binding positions include 68 to 70 (RSG), Asn-81, and 85 to 87 (LID).

Belongs to the dUTPase family. Mg(2+) is required as a cofactor.

The catalysed reaction is dUTP + H2O = dUMP + diphosphate + H(+). It functions in the pathway pyrimidine metabolism; dUMP biosynthesis; dUMP from dCTP (dUTP route): step 2/2. This enzyme is involved in nucleotide metabolism: it produces dUMP, the immediate precursor of thymidine nucleotides and it decreases the intracellular concentration of dUTP so that uracil cannot be incorporated into DNA. In Nitrosospira multiformis (strain ATCC 25196 / NCIMB 11849 / C 71), this protein is Deoxyuridine 5'-triphosphate nucleotidohydrolase.